The sequence spans 88 residues: UPF0237 protein SMU_72 (88 aa).

Positions 4–77 constitute an ACT domain; the sequence is IITVVGKDRT…ETLNVKINIQ (74 aa).

This sequence belongs to the UPF0237 family. As to quaternary structure, homodimer.

The protein is UPF0237 protein SMU_72 of Streptococcus mutans serotype c (strain ATCC 700610 / UA159).